A 287-amino-acid chain; its full sequence is Cyclopropane mycolic acid synthase MmaA2 (287 aa).

S-adenosyl-L-methionine contacts are provided by residues 33 to 34 (YS), 72 to 74 (GCG), 94 to 99 (TLSKNQ), 123 to 124 (WE), and Ile136. Cys269 is an active-site residue.

Belongs to the CFA/CMAS family.

It carries out the reaction a 1-acyl-2-(9Z)-enoyl-sn-glycero-3-phospholipid + S-adenosyl-L-methionine = a 1-acyl-2-(9-cyclopronane)-acyl-sn-glycero-3-phospholipid + S-adenosyl-L-homocysteine + H(+). It participates in lipid metabolism; mycolic acid biosynthesis. Functionally, catalyzes the conversion of a double bond to a cis cyclopropane ring at the distal position of an alpha mycolic acid via the transfer of a methylene group from S-adenosyl-L-methionine. MmaA2 also catalyzes the biosynthesis of the cis-cyclopropanated methoxymycolates. Cyclopropanated mycolic acids are key factors participating in cell envelope permeability, host immunomodulation and persistence. The sequence is that of Cyclopropane mycolic acid synthase MmaA2 (mmaA2) from Mycobacterium tuberculosis (strain ATCC 25177 / H37Ra).